The primary structure comprises 234 residues: Geranylgeranylglyceryl phosphate synthase (234 aa).

Positions 24 and 52 each coordinate Mg(2+). Residues 172–178 (YLEAGSG), 203–204 (GG), and 225–226 (GT) contribute to the sn-glycerol 1-phosphate site.

It belongs to the GGGP/HepGP synthase family. Group II subfamily. In terms of assembly, homodimer. Mg(2+) serves as cofactor.

It carries out the reaction sn-glycerol 1-phosphate + (2E,6E,10E)-geranylgeranyl diphosphate = sn-3-O-(geranylgeranyl)glycerol 1-phosphate + diphosphate. Functionally, prenyltransferase that catalyzes the transfer of the geranylgeranyl moiety of geranylgeranyl diphosphate (GGPP) to the C3 hydroxyl of sn-glycerol-1-phosphate (G1P). In Zunongwangia profunda (strain DSM 18752 / CCTCC AB 206139 / SM-A87) (Wangia profunda), this protein is Geranylgeranylglyceryl phosphate synthase.